The following is a 60-amino-acid chain: Large ribosomal subunit protein uL30 (60 aa).

This sequence belongs to the universal ribosomal protein uL30 family. In terms of assembly, part of the 50S ribosomal subunit.

The chain is Large ribosomal subunit protein uL30 from Shewanella sp. (strain MR-7).